The primary structure comprises 199 residues: Shikimate kinase (199 aa).

ATP is bound at residue 12-17 (GAGKST). S16 is a binding site for Mg(2+). D34, R58, and G80 together coordinate substrate. ATP is bound at residue R117. R136 contacts substrate. A disordered region spans residues 174–199 (VSGGDRKSSEAERSGAPLRKSSEVVK). Residues 177-186 (GDRKSSEAER) show a composition bias toward basic and acidic residues.

This sequence belongs to the shikimate kinase family. As to quaternary structure, monomer. Mg(2+) serves as cofactor.

It is found in the cytoplasm. The enzyme catalyses shikimate + ATP = 3-phosphoshikimate + ADP + H(+). It functions in the pathway metabolic intermediate biosynthesis; chorismate biosynthesis; chorismate from D-erythrose 4-phosphate and phosphoenolpyruvate: step 5/7. In terms of biological role, catalyzes the specific phosphorylation of the 3-hydroxyl group of shikimic acid using ATP as a cosubstrate. The chain is Shikimate kinase from Mycobacterium leprae (strain TN).